The following is a 219-amino-acid chain: Deoxyribose-phosphate aldolase (219 aa).

The active-site Proton donor/acceptor is the D89. Catalysis depends on K151, which acts as the Schiff-base intermediate with acetaldehyde. Catalysis depends on K180, which acts as the Proton donor/acceptor.

This sequence belongs to the DeoC/FbaB aldolase family. DeoC type 1 subfamily.

It is found in the cytoplasm. The catalysed reaction is 2-deoxy-D-ribose 5-phosphate = D-glyceraldehyde 3-phosphate + acetaldehyde. The protein operates within carbohydrate degradation; 2-deoxy-D-ribose 1-phosphate degradation; D-glyceraldehyde 3-phosphate and acetaldehyde from 2-deoxy-alpha-D-ribose 1-phosphate: step 2/2. Functionally, catalyzes a reversible aldol reaction between acetaldehyde and D-glyceraldehyde 3-phosphate to generate 2-deoxy-D-ribose 5-phosphate. This is Deoxyribose-phosphate aldolase from Coprothermobacter proteolyticus (strain ATCC 35245 / DSM 5265 / OCM 4 / BT).